A 238-amino-acid polypeptide reads, in one-letter code: Sugar fermentation stimulation protein homolog (238 aa).

The protein belongs to the SfsA family.

This is Sugar fermentation stimulation protein homolog from Klebsiella pneumoniae (strain 342).